A 143-amino-acid polypeptide reads, in one-letter code: Glutamate-rich protein 4 (143 aa).

Residues 90–106 (LEEEEEDDDEEEQEEEG) show a composition bias toward acidic residues. Positions 90-143 (LEEEEEDDDEEEQEEEGEGKNCVEENKGLQGKQGEKCSGNPYPAQRLPDFEMTI) are disordered. Residues 107-116 (EGKNCVEENK) are compositionally biased toward basic and acidic residues.

The polypeptide is Glutamate-rich protein 4 (Erich4) (Rattus norvegicus (Rat)).